The primary structure comprises 175 residues: Large ribosomal subunit protein uL10 (175 aa).

The protein belongs to the universal ribosomal protein uL10 family. As to quaternary structure, part of the ribosomal stalk of the 50S ribosomal subunit. The N-terminus interacts with L11 and the large rRNA to form the base of the stalk. The C-terminus forms an elongated spine to which L12 dimers bind in a sequential fashion forming a multimeric L10(L12)X complex.

Its function is as follows. Forms part of the ribosomal stalk, playing a central role in the interaction of the ribosome with GTP-bound translation factors. This Prochlorococcus marinus subsp. pastoris (strain CCMP1986 / NIES-2087 / MED4) protein is Large ribosomal subunit protein uL10.